The sequence spans 217 residues: Thymidylate kinase (217 aa).

An ATP-binding site is contributed by G14–T21.

The protein belongs to the thymidylate kinase family.

It carries out the reaction dTMP + ATP = dTDP + ADP. Phosphorylation of dTMP to form dTDP in both de novo and salvage pathways of dTTP synthesis. The sequence is that of Thymidylate kinase from Orientia tsutsugamushi (strain Ikeda) (Rickettsia tsutsugamushi).